The primary structure comprises 159 residues: Ribosomal RNA large subunit methyltransferase H (159 aa).

S-adenosyl-L-methionine contacts are provided by residues L76, G108, and 127-132 (FGRLTY).

Belongs to the RNA methyltransferase RlmH family. In terms of assembly, homodimer.

The protein resides in the cytoplasm. It catalyses the reaction pseudouridine(1915) in 23S rRNA + S-adenosyl-L-methionine = N(3)-methylpseudouridine(1915) in 23S rRNA + S-adenosyl-L-homocysteine + H(+). In terms of biological role, specifically methylates the pseudouridine at position 1915 (m3Psi1915) in 23S rRNA. The protein is Ribosomal RNA large subunit methyltransferase H of Enterococcus faecalis (strain ATCC 700802 / V583).